Here is a 218-residue protein sequence, read N- to C-terminus: Octanoyltransferase (218 aa).

Residues 31–206 (EETPDEVWLV…ELVNLLGYEQ (176 aa)) form the BPL/LPL catalytic domain. Substrate-binding positions include 70–77 (RGGQVTYH), 137–139 (SLG), and 150–152 (GLA). Catalysis depends on Cys-168, which acts as the Acyl-thioester intermediate.

This sequence belongs to the LipB family.

The protein localises to the cytoplasm. The catalysed reaction is octanoyl-[ACP] + L-lysyl-[protein] = N(6)-octanoyl-L-lysyl-[protein] + holo-[ACP] + H(+). It participates in protein modification; protein lipoylation via endogenous pathway; protein N(6)-(lipoyl)lysine from octanoyl-[acyl-carrier-protein]: step 1/2. Catalyzes the transfer of endogenously produced octanoic acid from octanoyl-acyl-carrier-protein onto the lipoyl domains of lipoate-dependent enzymes. Lipoyl-ACP can also act as a substrate although octanoyl-ACP is likely to be the physiological substrate. The protein is Octanoyltransferase of Vibrio vulnificus (strain YJ016).